A 231-amino-acid polypeptide reads, in one-letter code: Uracil phosphoribosyltransferase (231 aa).

38-42 (KGLVR) contributes to the GTP binding site. Residues arginine 87, arginine 112, and 140–148 (DPMIATGST) contribute to the 5-phospho-alpha-D-ribose 1-diphosphate site. Uracil contacts are provided by residues isoleucine 203 and 208-210 (GDA). Residue aspartate 209 coordinates 5-phospho-alpha-D-ribose 1-diphosphate.

This sequence belongs to the UPRTase family. The cofactor is Mg(2+).

It carries out the reaction UMP + diphosphate = 5-phospho-alpha-D-ribose 1-diphosphate + uracil. It functions in the pathway pyrimidine metabolism; UMP biosynthesis via salvage pathway; UMP from uracil: step 1/1. Its activity is regulated as follows. Allosterically activated by GTP. Catalyzes the conversion of uracil and 5-phospho-alpha-D-ribose 1-diphosphate (PRPP) to UMP and diphosphate. The polypeptide is Uracil phosphoribosyltransferase (Methanococcus maripaludis (strain C6 / ATCC BAA-1332)).